We begin with the raw amino-acid sequence, 114 residues long: Ribonuclease P protein component (114 aa).

The protein belongs to the RnpA family. In terms of assembly, consists of a catalytic RNA component (M1 or rnpB) and a protein subunit.

The catalysed reaction is Endonucleolytic cleavage of RNA, removing 5'-extranucleotides from tRNA precursor.. Functionally, RNaseP catalyzes the removal of the 5'-leader sequence from pre-tRNA to produce the mature 5'-terminus. It can also cleave other RNA substrates such as 4.5S RNA. The protein component plays an auxiliary but essential role in vivo by binding to the 5'-leader sequence and broadening the substrate specificity of the ribozyme. The polypeptide is Ribonuclease P protein component (Borrelia hermsii (strain HS1 / DAH)).